The following is a 415-amino-acid chain: Serine--tRNA ligase (415 aa).

An L-serine-binding site is contributed by 231-233 (TAE). 262 to 264 (RSE) provides a ligand contact to ATP. Residue Glu-285 coordinates L-serine. 349-352 (EISS) contacts ATP. Ser-383 serves as a coordination point for L-serine.

Belongs to the class-II aminoacyl-tRNA synthetase family. Type-1 seryl-tRNA synthetase subfamily. As to quaternary structure, homodimer. The tRNA molecule binds across the dimer.

It is found in the cytoplasm. The enzyme catalyses tRNA(Ser) + L-serine + ATP = L-seryl-tRNA(Ser) + AMP + diphosphate + H(+). The catalysed reaction is tRNA(Sec) + L-serine + ATP = L-seryl-tRNA(Sec) + AMP + diphosphate + H(+). It functions in the pathway aminoacyl-tRNA biosynthesis; selenocysteinyl-tRNA(Sec) biosynthesis; L-seryl-tRNA(Sec) from L-serine and tRNA(Sec): step 1/1. Its function is as follows. Catalyzes the attachment of serine to tRNA(Ser). Is also able to aminoacylate tRNA(Sec) with serine, to form the misacylated tRNA L-seryl-tRNA(Sec), which will be further converted into selenocysteinyl-tRNA(Sec). The protein is Serine--tRNA ligase of Helicobacter pylori (strain J99 / ATCC 700824) (Campylobacter pylori J99).